The chain runs to 55 residues: Large ribosomal subunit protein bL33 (55 aa).

This sequence belongs to the bacterial ribosomal protein bL33 family.

This Roseobacter denitrificans (strain ATCC 33942 / OCh 114) (Erythrobacter sp. (strain OCh 114)) protein is Large ribosomal subunit protein bL33.